Consider the following 442-residue polypeptide: Endothelin receptor type B (442 aa).

The first 26 residues, 1–26 (MQPPPSLCGRALVALVLACGLSRIWG), serve as a signal peptide directing secretion. At 27–101 (EERGFPPDRA…GPIEIKETFK (75 aa)) the chain is on the extracellular side. N-linked (GlcNAc...) asparagine glycosylation is present at asparagine 59. The disordered stretch occupies residues 69 to 88 (AEVPKGDRTAGSPPRTISPP). Residues 102–126 (YINTVVSCLVFVLGIIGNSTLLRII) traverse the membrane as a helical segment. The Cytoplasmic portion of the chain corresponds to 127-137 (YKNKCMRNGPN). The helical transmembrane segment at 138–163 (ILIASLALGDLLHIVIDIPINVYKLL) threads the bilayer. Residues 164–175 (AEDWPFGAEMCK) lie on the Extracellular side of the membrane. Cysteine 174 and cysteine 255 are joined by a disulfide. A helical membrane pass occupies residues 176–197 (LVPFIQKASVGITVLSLCALSI). Residues 198–218 (DRYRAVASWSRIKGIGVPKWT) lie on the Cytoplasmic side of the membrane. The helical transmembrane segment at 219–243 (AVEIVLIWVVSVVLAVPEAIGFDII) threads the bilayer. At 244-271 (TMDYKGSYLRICLLHPVQKTAFMQFYKT) the chain is on the extracellular side. Residues 272–296 (AKDWWLFSFYFCLPLAITAFFYTLM) form a helical membrane-spanning segment. Residues 297–324 (TCEMLRKKSGMQIALNDHLKQRREVAKT) are Cytoplasmic-facing. Serine 305 carries the phosphoserine modification. Residues 325–350 (VFCLVLVFALCWLPLHLSRILKLTLY) traverse the membrane as a helical segment. The Extracellular portion of the chain corresponds to 351–362 (NQNDPNRCELLS). Residues 363-389 (FLLVLDYIGINMASLNSCINPIALYLV) traverse the membrane as a helical segment. The Cytoplasmic portion of the chain corresponds to 390–442 (SKRFKNCFKSCLCCWCQSFEEKQSLEEKQSCLKFKANDHGYDNFRSSNKYSSS). S-palmitoyl cysteine attachment occurs at residues cysteine 402, cysteine 403, and cysteine 405. Serine 419 carries the post-translational modification Phosphoserine. The residue at position 439 (tyrosine 439) is a Phosphotyrosine. Serine 440, serine 441, and serine 442 each carry phosphoserine.

This sequence belongs to the G-protein coupled receptor 1 family. Endothelin receptor subfamily. EDNRB sub-subfamily. Palmitoylation of Cys-402 was confirmed by the palmitoylation of Cys-402 in a deletion mutant lacking both Cys-403 and Cys-405. Expressed in placental stem villi vessels, but not in cultured placental villi smooth muscle cells.

The protein resides in the cell membrane. In terms of biological role, non-specific receptor for endothelin 1, 2, and 3. Mediates its action by association with G proteins that activate a phosphatidylinositol-calcium second messenger system. In Homo sapiens (Human), this protein is Endothelin receptor type B.